A 235-amino-acid chain; its full sequence is 5'-methylthioadenosine/S-adenosylhomocysteine nucleosidase (235 aa).

Glutamate 12 acts as the Proton acceptor in catalysis. Substrate contacts are provided by residues glycine 78, methionine 153, and 174 to 175; that span reads ME. Aspartate 198 acts as the Proton donor in catalysis.

Belongs to the PNP/UDP phosphorylase family. MtnN subfamily.

The enzyme catalyses S-adenosyl-L-homocysteine + H2O = S-(5-deoxy-D-ribos-5-yl)-L-homocysteine + adenine. It catalyses the reaction S-methyl-5'-thioadenosine + H2O = 5-(methylsulfanyl)-D-ribose + adenine. It carries out the reaction 5'-deoxyadenosine + H2O = 5-deoxy-D-ribose + adenine. It functions in the pathway amino-acid biosynthesis; L-methionine biosynthesis via salvage pathway; S-methyl-5-thio-alpha-D-ribose 1-phosphate from S-methyl-5'-thioadenosine (hydrolase route): step 1/2. In terms of biological role, catalyzes the irreversible cleavage of the glycosidic bond in both 5'-methylthioadenosine (MTA) and S-adenosylhomocysteine (SAH/AdoHcy) to adenine and the corresponding thioribose, 5'-methylthioribose and S-ribosylhomocysteine, respectively. Also cleaves 5'-deoxyadenosine, a toxic by-product of radical S-adenosylmethionine (SAM) enzymes, into 5-deoxyribose and adenine. In Pseudoalteromonas translucida (strain TAC 125), this protein is 5'-methylthioadenosine/S-adenosylhomocysteine nucleosidase.